A 466-amino-acid chain; its full sequence is Vacuolar protein sorting-associated protein 30 (466 aa).

Residues 35 to 55 are disordered; that stretch reads SETNTDNSDNNKHNGENDRNI. The span at 43-53 shows a compositional bias: basic and acidic residues; it reads DNNKHNGENDR. Residues 149 to 258 are a coiled coil; the sequence is DTLLEKLKEE…QMEHLSFIKD (110 aa). Residues 279-463 form a BARA region; the sequence is LNIYNETFRI…LAFSTSRINK (185 aa). Positions 439–464 are required for membrane-association, autophagic function during starvation and normal autophagosome morphology; the sequence is WTTACKFLLTNIKWLLAFSTSRINKA.

This sequence belongs to the beclin family. As to quaternary structure, component of the autophagy-specific VPS34 PI3-kinase complex I; and of the VPS34 PI3-kinase complex II.

It is found in the endosome membrane. It localises to the vacuole membrane. The protein localises to the preautophagosomal structure membrane. Its function is as follows. Required for cytoplasm to vacuole transport (Cvt), autophagy, nucleophagy, and mitophagy, as a part of the autophagy-specific VPS34 PI3-kinase complex I. This complex is essential to recruit the ATG8-phosphatidylinositol conjugate and the ATG12-ATG5 conjugate to the pre-autophagosomal structure. Also involved in endosome-to-Golgi retrograde transport as part of the VPS34 PI3-kinase complex II. The protein is Vacuolar protein sorting-associated protein 30 of Kluyveromyces marxianus (strain DMKU3-1042 / BCC 29191 / NBRC 104275) (Yeast).